Here is a 366-residue protein sequence, read N- to C-terminus: Aliphatic nitrilase (366 aa).

In terms of domain architecture, CN hydrolase spans 8 to 282; sequence FKVAAVQAQP…EGILYADIDL (275 aa). Catalysis depends on Glu-48, which acts as the Proton acceptor. The active-site Proton donor is Lys-131. The active-site Nucleophile is the Cys-165. The interval 346–366 is disordered; it reads DEQRALPSTHSDETDRATASI. The span at 355–366 shows a compositional bias: basic and acidic residues; that stretch reads HSDETDRATASI.

Belongs to the carbon-nitrogen hydrolase superfamily. Nitrilase family. As to quaternary structure, homodimer.

It catalyses the reaction an aliphatic nitrile + 2 H2O = a carboxylate + NH4(+). The sequence is that of Aliphatic nitrilase (nitA) from Rhodococcus rhodochrous.